The primary structure comprises 265 residues: Mlc titration factor A (265 aa).

Zn(2+) contacts are provided by His-111, His-148, His-152, and Glu-211.

The protein belongs to the MtfA family. In terms of assembly, interacts with Mlc. Zn(2+) serves as cofactor.

It localises to the cytoplasm. In terms of biological role, involved in the modulation of the activity of the glucose-phosphotransferase system (glucose-PTS). Interacts with the transcriptional repressor Mlc, preventing its interaction with DNA and leading to the modulation of expression of genes regulated by Mlc, including ptsG, which encodes the PTS system glucose-specific EIICB component. Its function is as follows. Shows zinc-dependent metallopeptidase activity. This chain is Mlc titration factor A, found in Salmonella agona (strain SL483).